The primary structure comprises 95 residues: MKLVFLFLLVTIPICCYASGSGCSILDEVIRGTINSTVTLHDYMKLVKPYVQDHFTEKAVKQFKQCFLDQTDKTLENVGVMMEAIFNSESCQQPS.

A signal peptide spans 1-18; that stretch reads MKLVFLFLLVTIPICCYA. The N-linked (GlcNAc...) asparagine glycan is linked to Asn-35.

Belongs to the secretoglobin family. Lipophilin subfamily. In terms of assembly, prostatein is composed of three different peptides called C1, C2 and C3. These form covalent C1:C3 (F) and C2:C3 (S) heterodimers whose non-covalent association forms tetrameric (C1:C3/C3:C2) prostatein molecules. In terms of tissue distribution, highly expressed in ventral prostate.

The protein localises to the secreted. Its function is as follows. Part of prostatein which is the major secretory glycoprotein of ventral prostate gland. Steroid-binding protein; can bind non-polar steroids, cholesterol and a group of small proline-rich peptides. This Rattus norvegicus (Rat) protein is Secretoglobin family 2A member 2 (Scgb2a2).